Reading from the N-terminus, the 105-residue chain is Met repressor (105 aa).

It belongs to the MetJ family. In terms of assembly, homodimer.

It localises to the cytoplasm. Its function is as follows. This regulatory protein, when combined with SAM (S-adenosylmethionine) represses the expression of the methionine regulon and of enzymes involved in SAM synthesis. The protein is Met repressor of Sodalis glossinidius (strain morsitans).